Here is a 91-residue protein sequence, read N- to C-terminus: Small ribosomal subunit protein uS19 (91 aa).

Positions 72–91 (GEFSPTRKFGGHGDDKKKKK) are disordered. Positions 82 to 91 (GHGDDKKKKK) are enriched in basic and acidic residues.

It belongs to the universal ribosomal protein uS19 family.

Its function is as follows. Protein S19 forms a complex with S13 that binds strongly to the 16S ribosomal RNA. The chain is Small ribosomal subunit protein uS19 from Spiroplasma kunkelii.